Reading from the N-terminus, the 1651-residue chain is A.superbus venom factor 2 (1651 aa).

An N-terminal signal peptide occupies residues 1–22 (MEGMALYLVAALLIGFPGSSHG). A glycan (N-linked (GlcNAc...) asparagine) is linked at N189. Mg(2+) is bound by residues P519, D542, V543, and D545. 12 disulfides stabilise this stretch: C547/C808, C616/C651, C684/C711, C685/C718, C698/C719, C864/C1501, C1346/C1477, C1377/C1446, C1494/C1499, C1506/C1578, C1525/C1649, and C1625/C1634. Positions 657–739 (RRRRSSVLLL…QRESELFLAR (83 aa)) are excised as a propeptide. The tract at residues 661–739 (SSVLLLDSKA…QRESELFLAR (79 aa)) is C3a-like domain. Residues 684–719 (CCEDGMHENPMGYTCEKRAKYTQEGDACKAAFLECC) form the Anaphylatoxin-like domain. The segment at 743-754 (EDEFFEEDNIIS) is factor B binding site. The propeptide occupies 992 to 1269 (HLIITPSGSG…VMVFQALAEY (278 aa)). The segment at 992-1269 (HLIITPSGSG…VMVFQALAEY (278 aa)) is C3d-like domain. The interval 1197–1259 (VLMAASTGRD…GGTYGQTQAT (63 aa)) is factor H binding site. 2 N-linked (GlcNAc...) asparagine glycosylation sites follow: N1282 and N1352. Residues 1506–1649 (CSLLNQQKKI…LSNTLTIFGC (144 aa)) form the NTR domain.

It belongs to the venom complement C3 homolog family. As to quaternary structure, heterotrimer of alpha, beta and gamma chains; disulfide-linked. Is active with factor B in the presence of factor D. Post-translationally, first processed by the removal of 4 Arg residues by furin-type protease, forming two chains, alpha and gamma/beta precursor, linked by a disulfide bond. This mature AVF is composed of three chains: alpha, gamma and beta. Expressed by the venom gland.

It is found in the secreted. Its function is as follows. Complement-activating protein in snake venom. It is a structural and functional analog of complement component C3b, the activated form of C3. It binds factor B (CFB), which is subsequently cleaved by factor D (CFD) to form the bimolecular complex AVF/Bb. AVF/Bb is a C3 convertase that cleaves complement component C3, but not C5 (as do CVF/Bb). This Austrelaps superbus (Lowland copperhead snake) protein is A.superbus venom factor 2.